A 399-amino-acid chain; its full sequence is tRNA-specific 2-thiouridylase MnmA (399 aa).

Residues 21–28 (AMSGGVDS) and Leu-47 contribute to the ATP site. The Nucleophile role is filled by Cys-115. An intrachain disulfide couples Cys-115 to Cys-211. Residue Gly-139 coordinates ATP. Residues 161-163 (RDQ) are interaction with tRNA. Residue Cys-211 is the Cysteine persulfide intermediate of the active site.

This sequence belongs to the MnmA/TRMU family.

Its subcellular location is the cytoplasm. The catalysed reaction is S-sulfanyl-L-cysteinyl-[protein] + uridine(34) in tRNA + AH2 + ATP = 2-thiouridine(34) in tRNA + L-cysteinyl-[protein] + A + AMP + diphosphate + H(+). Catalyzes the 2-thiolation of uridine at the wobble position (U34) of tRNA, leading to the formation of s(2)U34. This is tRNA-specific 2-thiouridylase MnmA from Parvibaculum lavamentivorans (strain DS-1 / DSM 13023 / NCIMB 13966).